A 576-amino-acid chain; its full sequence is Sulfite reductase [NADPH] hemoprotein beta-component (576 aa).

[4Fe-4S] cluster-binding residues include Cys-439, Cys-445, Cys-485, and Cys-489. Position 489 (Cys-489) interacts with siroheme.

This sequence belongs to the nitrite and sulfite reductase 4Fe-4S domain family. As to quaternary structure, alpha(8)-beta(8). The alpha component is a flavoprotein, the beta component is a hemoprotein. The cofactor is siroheme. [4Fe-4S] cluster serves as cofactor.

It carries out the reaction hydrogen sulfide + 3 NADP(+) + 3 H2O = sulfite + 3 NADPH + 4 H(+). It functions in the pathway sulfur metabolism; hydrogen sulfide biosynthesis; hydrogen sulfide from sulfite (NADPH route): step 1/1. In terms of biological role, component of the sulfite reductase complex that catalyzes the 6-electron reduction of sulfite to sulfide. This is one of several activities required for the biosynthesis of L-cysteine from sulfate. The sequence is that of Sulfite reductase [NADPH] hemoprotein beta-component from Aliivibrio salmonicida (strain LFI1238) (Vibrio salmonicida (strain LFI1238)).